Reading from the N-terminus, the 93-residue chain is CRISPR-associated endoribonuclease Cas2 2 (93 aa).

Residue Asp-9 participates in Mg(2+) binding.

This sequence belongs to the CRISPR-associated endoribonuclease Cas2 protein family. In terms of assembly, homodimer, forms a heterotetramer with a Cas1 homodimer. It depends on Mg(2+) as a cofactor.

CRISPR (clustered regularly interspaced short palindromic repeat), is an adaptive immune system that provides protection against mobile genetic elements (viruses, transposable elements and conjugative plasmids). CRISPR clusters contain sequences complementary to antecedent mobile elements and target invading nucleic acids. CRISPR clusters are transcribed and processed into CRISPR RNA (crRNA). Functions as a ssRNA-specific endoribonuclease. Involved in the integration of spacer DNA into the CRISPR cassette. The polypeptide is CRISPR-associated endoribonuclease Cas2 2 (Synechocystis sp. (strain ATCC 27184 / PCC 6803 / Kazusa)).